A 535-amino-acid polypeptide reads, in one-letter code: Ribonuclease Y (535 aa).

Residues 4 to 24 traverse the membrane as a helical segment; that stretch reads IILLIVSALIGLILGYALISI. The tract at residues 118-141 is disordered; the sequence is ENLSSKEKVLDSKEQSLTDKSKHI. Residues 225 to 285 form the KH domain; the sequence is TITSVHLPDD…IRREIARMTL (61 aa). The 94-residue stretch at 351–444 folds into the HD domain; the sequence is VLRHSVEVGK…VAAADALSSA (94 aa).

The protein belongs to the RNase Y family.

It is found in the cell membrane. Its function is as follows. Endoribonuclease that initiates mRNA decay. This chain is Ribonuclease Y, found in Streptococcus pyogenes serotype M18 (strain MGAS8232).